The sequence spans 470 residues: 5-hydroxytryptamine receptor 2A (470 aa).

Residues 1-80 lie on the Extracellular side of the membrane; sequence MDILCEENTS…LQEKNWSALL (80 aa). Asn-38 carries an N-linked (GlcNAc...) asparagine glycan. The helical transmembrane segment at 81 to 97 threads the bilayer; sequence TAVVIILTIAGNILVIM. Topologically, residues 98-111 are cytoplasmic; that stretch reads AVSLEKKLQNATNY. Residues 112-137 form a helical membrane-spanning segment; that stretch reads FLMSLAIADMLLGFLVMPVSTLTILY. Over 138–146 the chain is Extracellular; it reads GYRWPLPSK. The helical transmembrane segment at 147 to 171 threads the bilayer; sequence LCAVWIYLDVLFSTASIMHLCAISL. Cysteines 148 and 227 form a disulfide. Asp-155 contacts serotonin. The DRY motif; important for ligand-induced conformation changes signature appears at 172–174; sequence DRY. Over 172–191 the chain is Cytoplasmic; the sequence is DRYVAIQNPIHHSRFNSRTK. A helical transmembrane segment spans residues 192–215; sequence AFLKIIAVWTISVGISMPIPVFGL. Over 216–232 the chain is Extracellular; sequence QDDSKVFKEGSCLLADE. Residues 233–258 form a helical membrane-spanning segment; it reads NFVLIGSFVAFFIPLTIMVITYFLTI. Over 259-321 the chain is Cytoplasmic; the sequence is KSLQKEATLC…QSISNEQKAC (63 aa). A Phosphoserine modification is found at Ser-280. A helical transmembrane segment spans residues 322-347; it reads KVLGIVFFLFVVMWCPFFITNIMAVI. Asn-342 is a serotonin binding site. Cys-348 and Cys-352 are disulfide-bonded. The Extracellular portion of the chain corresponds to 348-355; the sequence is CKESCNRD. A helical membrane pass occupies residues 356–381; sequence VIEALLNVFVWIGYLSSAVNPLVYTL. The NPxxY motif; important for ligand-induced conformation changes and signaling motif lies at 375 to 379; sequence NPLVY. The Cytoplasmic portion of the chain corresponds to 382–470; it reads FNKTYRSAFS…NTVNEKVSCV (89 aa). Positions 424–470 are disordered; the sequence is QMGPKKNSKKDDKTTDNDCTMVALGKEHPEDAPADSSNTVNEKVSCV. The segment covering 458–470 has biased composition (polar residues); that stretch reads DSSNTVNEKVSCV. The PDZ-binding signature appears at 468-470; it reads SCV.

Belongs to the G-protein coupled receptor 1 family. Interacts (via C-terminus) with MPDZ and PATJ. May interact (via C-terminus) with MPP3, PRDX6, DLG4, DLG1, CASK, APBA1 and MAGI2. Interacts with GRM2 and DRD2; this may affect signaling.

The protein resides in the cell membrane. It localises to the cell projection. It is found in the dendrite. Its subcellular location is the axon. The protein localises to the cytoplasmic vesicle. The protein resides in the membrane. It localises to the caveola. It is found in the presynapse. Its activity is regulated as follows. G-protein coupled receptor activity is regulated by lipids: oleamide increases HTR2A-mediated activity. In terms of biological role, G-protein coupled receptor for 5-hydroxytryptamine (serotonin). Also functions as a receptor for various drugs and psychoactive substances, including mescaline, psilocybin, 1-(2,5-dimethoxy-4-iodophenyl)-2-aminopropane (DOI) and lysergic acid diethylamide (LSD). Ligand binding causes a conformation change that triggers signaling via guanine nucleotide-binding proteins (G proteins) and modulates the activity of downstream effectors. HTR2A is coupled to G(q)/G(11) G alpha proteins and activates phospholipase C-beta, releasing diacylglycerol (DAG) and inositol 1,4,5-trisphosphate (IP3) second messengers that modulate the activity of phosphatidylinositol 3-kinase and promote the release of Ca(2+) ions from intracellular stores, respectively. Beta-arrestin family members inhibit signaling via G proteins and mediate activation of alternative signaling pathways. Affects neural activity, perception, cognition and mood. Plays a role in the regulation of behavior, including responses to anxiogenic situations and psychoactive substances. Plays a role in intestinal smooth muscle contraction, and may play a role in arterial vasoconstriction. This Bos taurus (Bovine) protein is 5-hydroxytryptamine receptor 2A (HTR2A).